The chain runs to 312 residues: MIRIGTRGSLLATTQAGTIRDALIAAGHDAELVIISTEGDRRADEPIADIGVGVFTAALREAIADNVVDAAVHSYKDLPTAVDPRFMIAATPVREDARDALVARDGMVLGELPAGSVIGTSSPRRVAQLKALGLGLEIRPLRGNLDTRLNRVSSGELDAIVVAKAGLSRIGRLEVVTETLEPVQMLPAPAQGALAIECRAGDTALAQLLAELDDADTRAAVTAERTLLAELEAGCSAPVGAIAEVVESIDEDGRVFEELSLRGCVATLDGSDVIRASGIGSPDRARELGLSVAAELFDLGARDLLDERGRDT.

The residue at position 235 (Cys-235) is an S-(dipyrrolylmethanemethyl)cysteine.

This sequence belongs to the HMBS family. Monomer. Requires dipyrromethane as cofactor.

The enzyme catalyses 4 porphobilinogen + H2O = hydroxymethylbilane + 4 NH4(+). It functions in the pathway porphyrin-containing compound metabolism; protoporphyrin-IX biosynthesis; coproporphyrinogen-III from 5-aminolevulinate: step 2/4. In terms of biological role, tetrapolymerization of the monopyrrole PBG into the hydroxymethylbilane pre-uroporphyrinogen in several discrete steps. In Mycolicibacterium gilvum (strain PYR-GCK) (Mycobacterium gilvum (strain PYR-GCK)), this protein is Porphobilinogen deaminase.